Reading from the N-terminus, the 83-residue chain is Snake venom metalloproteinase BnP1 (83 aa).

The region spanning 8–83 (SYIELAVVAD…NPQCIINQPI (76 aa)) is the Peptidase M12B domain. Glutamate 11, cysteine 77, and asparagine 80 together coordinate Ca(2+).

The protein belongs to the venom metalloproteinase (M12B) family. P-I subfamily. Monomer. Zn(2+) is required as a cofactor. Expressed by the venom gland.

Its subcellular location is the secreted. Inhibited by EDTA. Its function is as follows. This protein is a zinc protease from snake venom that is devoid of significant myotoxic and hemorrhagic activities. It hydrolyzes the Aalpha-chain and more slowly the Bbeta-chain of fibrin and fibrinogen, without affecting the gamma-chains. It induces cell detachment and a apoptosis (anoikis) in endothelial cells. The polypeptide is Snake venom metalloproteinase BnP1 (Bothrops pauloensis (Neuwied's lancehead)).